We begin with the raw amino-acid sequence, 111 residues long: Cytochrome c2 (111 aa).

Heme c-binding residues include C14, C17, H18, and M83.

It belongs to the cytochrome c family. Binds 1 heme c group covalently per subunit.

Cytochrome c2 is found mainly in purple, non-sulfur, photosynthetic bacteria where it functions as the electron donor to the oxidized bacteriochlorophyll in the photophosphorylation pathway. However, it may also have a role in the respiratory chain and is found in some non-photosynthetic bacteria. In Agrobacterium tumefaciens (strain II Chrys), this protein is Cytochrome c2.